The sequence spans 354 residues: Dye-decolorizing peroxidase (354 aa).

Residue D165 is the Proton acceptor of the active site. H238 lines the heme pocket. Residues G312–A335 are targeting peptide. Residues D324–P337 are compositionally biased toward pro residues. The disordered stretch occupies residues D324–R354. Residues G342–R354 are compositionally biased toward polar residues.

It belongs to the DyP-type peroxidase family. Found in a complex with type 1 encapsulin, strongly suggesting it is found in a type 1 encapsulin nanocompartment. Homotetramer, presumably also in the type 1 encapsulin nanocompartment. Requires heme b as cofactor.

It localises to the encapsulin nanocompartment. The protein resides in the cell membrane. The enzyme catalyses 2 a phenolic donor + H2O2 = 2 a phenolic radical donor + 2 H2O. Functionally, cargo protein of a type 1 encapsulin nanocompartment. A heme-dependent peroxidase. This cargo-loaded encapsulin nanocompartment is probably involved in protection against oxidative damage. This Mycolicibacterium paratuberculosis (strain ATCC BAA-968 / K-10) (Mycobacterium paratuberculosis) protein is Dye-decolorizing peroxidase.